Consider the following 951-residue polypeptide: Protein translocase subunit SecA 1 (951 aa).

ATP is bound by residues Gln-87, Gly-105 to Thr-109, and Asp-525. The interval Pro-911–Gly-942 is disordered. Residues Cys-937, Cys-939, Cys-948, and His-949 each coordinate Zn(2+).

It belongs to the SecA family. As to quaternary structure, monomer and homodimer. Part of the essential Sec protein translocation apparatus which comprises SecA, SecYEG and auxiliary proteins SecDF-YajC and YidC. Zn(2+) is required as a cofactor.

It is found in the cell inner membrane. It localises to the cytoplasm. The enzyme catalyses ATP + H2O + cellular proteinSide 1 = ADP + phosphate + cellular proteinSide 2.. Functionally, part of the Sec protein translocase complex. Interacts with the SecYEG preprotein conducting channel. Has a central role in coupling the hydrolysis of ATP to the transfer of proteins into and across the cell membrane, serving both as a receptor for the preprotein-SecB complex and as an ATP-driven molecular motor driving the stepwise translocation of polypeptide chains across the membrane. The sequence is that of Protein translocase subunit SecA 1 from Nitrobacter hamburgensis (strain DSM 10229 / NCIMB 13809 / X14).